The primary structure comprises 356 residues: MSRIVLRREGTVEFYAPDPRAYGSIYSAPVFYNPAMEKNRTLSVLFLKAYGATGLTVCEPLSGTGVRGIRYAVETGAVGRLILNDISREAVELIKKNLEVNGVDAEVYNEDANVLLHRLRDKCDVVDIDPFGSPAPFLQAGFRALREEGVICVTATDTAVLVGRYPKKCLRRYGAVMFKTPFYIEAGLRNLTGYVARVAASEDYGFEPLFAYWEGHYFRLCARAVRGARDADSNFNFIGYVEYKKPSRKVVRRPGERSLGPLWVGPMGDPILVNKMAEYGPYGDFLQLLSEEYSVAAPWFFKVPEFALGGVSRGIEEALNALKKGGIYAVRTHMAPDGFKTEVSAGEVERVLRIVI.

One can recognise a Trm1 methyltransferase domain in the interval 5 to 352 (VLRREGTVEF…VSAGEVERVL (348 aa)). S-adenosyl-L-methionine contacts are provided by Arg-40, Arg-67, Asp-85, Asp-111, and Ala-112.

It belongs to the class I-like SAM-binding methyltransferase superfamily. Trm1 family.

The catalysed reaction is guanosine(26) in tRNA + 2 S-adenosyl-L-methionine = N(2)-dimethylguanosine(26) in tRNA + 2 S-adenosyl-L-homocysteine + 2 H(+). Its function is as follows. Dimethylates a single guanine residue at position 26 of a number of tRNAs using S-adenosyl-L-methionine as donor of the methyl groups. The polypeptide is tRNA (guanine(26)-N(2))-dimethyltransferase (Pyrobaculum arsenaticum (strain DSM 13514 / JCM 11321 / PZ6)).